The primary structure comprises 43 residues: Protein PsbN (43 aa).

Residues T5–F27 traverse the membrane as a helical segment.

It belongs to the PsbN family.

It localises to the plastid. It is found in the chloroplast thylakoid membrane. May play a role in photosystem I and II biogenesis. This is Protein PsbN from Coelogyne cristata (Orchid).